The sequence spans 111 residues: NADH-ubiquinone oxidoreductase chain 4 (111 aa).

A helical transmembrane segment spans residues 35–55 (LITSLFSWLDITVFLTGLSAF).

The protein belongs to the complex I subunit 4 family.

It is found in the mitochondrion membrane. The catalysed reaction is a ubiquinone + NADH + 5 H(+)(in) = a ubiquinol + NAD(+) + 4 H(+)(out). Core subunit of the mitochondrial membrane respiratory chain NADH dehydrogenase (Complex I) that is believed to belong to the minimal assembly required for catalysis. Complex I functions in the transfer of electrons from NADH to the respiratory chain. The immediate electron acceptor for the enzyme is believed to be ubiquinone. The protein is NADH-ubiquinone oxidoreductase chain 4 (MT-ND4) of Caiman crocodilus (Spectacled caiman).